Reading from the N-terminus, the 348-residue chain is Ninja-family protein AFP2 (348 aa).

The interval 186–272 is disordered; the sequence is DSDGGGATGG…VDRKGKGMAT (87 aa). Residues 187–197 are compositionally biased toward gly residues; it reads SDGGGATGGGS. Composition is skewed to polar residues over residues 207–216 and 228–244; these read KNQQGSSNSC and CSSNSGSQGTERPSVTR. The segment covering 247 to 267 has biased composition (basic and acidic residues); it reads KVNENENEKRVRSEDSVDRKG.

Belongs to the Ninja family. As to quaternary structure, forms a homodimer and heterodimer with AFP1 and AFP3. Interacts with ABI5/DPBF1, DPBF2, AREB3/DPBF3, EEL/DPBF4, ABF1, ABF3/DPBF5 and ABF4/AREB2.

The protein resides in the nucleus. Functionally, acts as a negative regulator of abscisic acid (ABA) response during germination through the ubiquitin-mediated proteolysis of ABI5/DPBF1. The sequence is that of Ninja-family protein AFP2 (AFP2) from Arabidopsis thaliana (Mouse-ear cress).